The following is a 285-amino-acid chain: MARCO-like protein (285 aa).

Positions 1-20 are cleaved as a signal peptide; sequence MRAFIFFLFMLLAMFSASST. A glycan (N-linked (GlcNAc...) asparagine) is linked at Asn24. Disordered stretches follow at residues 47–77 and 91–285; these read NHLG…GQPG and GRAG…QGNL. 2 stretches are compositionally biased toward polar residues: residues 57–67 and 105–114; these read KQGGSYTQGNP and SGKSNQKGNP. Low complexity predominate over residues 115–128; it reads ESSNKQENSGSSSQ. Polar residues predominate over residues 134-145; the sequence is ISTQQGNPGSSD. Residues 160 to 173 are compositionally biased toward low complexity; that stretch reads GSSSQQGKPGSSSQ. The span at 174 to 185 shows a compositional bias: polar residues; sequence HGNLGSSTQKGN. The span at 186-220 shows a compositional bias: low complexity; it reads LGSSSLQGHLGLSSHQGKPESSGQQGKPGSSSQQG. The segment covering 221 to 285 has biased composition (polar residues); sequence NLGTSGQQEK…PGSSSRQGNL (65 aa).

The chain is MARCO-like protein from Homo sapiens (Human).